We begin with the raw amino-acid sequence, 460 residues long: Glycine--tRNA ligase (460 aa).

Substrate contacts are provided by Arg99 and Glu162. ATP contacts are provided by residues 194-196 (RNE), 204-209 (FRTREF), 281-282 (EL), and 325-328 (GVGR). 209–213 (FEQME) lines the substrate pocket. 321-325 (EPAAG) contributes to the substrate binding site.

Belongs to the class-II aminoacyl-tRNA synthetase family. Homodimer.

It localises to the cytoplasm. It carries out the reaction tRNA(Gly) + glycine + ATP = glycyl-tRNA(Gly) + AMP + diphosphate. Functionally, catalyzes the attachment of glycine to tRNA(Gly). In Streptomyces coelicolor (strain ATCC BAA-471 / A3(2) / M145), this protein is Glycine--tRNA ligase.